The sequence spans 621 residues: tRNA uridine 5-carboxymethylaminomethyl modification enzyme MnmG (621 aa).

Position 9–14 (9–14) interacts with FAD; that stretch reads GGGHAG. Position 270 to 284 (270 to 284) interacts with NAD(+); it reads GPRYCPSIEDKIVKF.

The protein belongs to the MnmG family. As to quaternary structure, homodimer. Heterotetramer of two MnmE and two MnmG subunits. The cofactor is FAD.

It is found in the cytoplasm. NAD-binding protein involved in the addition of a carboxymethylaminomethyl (cmnm) group at the wobble position (U34) of certain tRNAs, forming tRNA-cmnm(5)s(2)U34. The sequence is that of tRNA uridine 5-carboxymethylaminomethyl modification enzyme MnmG from Borrelia garinii subsp. bavariensis (strain ATCC BAA-2496 / DSM 23469 / PBi) (Borreliella bavariensis).